We begin with the raw amino-acid sequence, 242 residues long: Glucosamine-6-phosphate deaminase (242 aa).

The active-site Proton acceptor; for enolization step is D67. The active-site For ring-opening step is the N136. The active-site Proton acceptor; for ring-opening step is the H138. The active-site For ring-opening step is E143.

It belongs to the glucosamine/galactosamine-6-phosphate isomerase family. NagB subfamily.

It catalyses the reaction alpha-D-glucosamine 6-phosphate + H2O = beta-D-fructose 6-phosphate + NH4(+). It participates in amino-sugar metabolism; N-acetylneuraminate degradation; D-fructose 6-phosphate from N-acetylneuraminate: step 5/5. Functionally, catalyzes the reversible isomerization-deamination of glucosamine 6-phosphate (GlcN6P) to form fructose 6-phosphate (Fru6P) and ammonium ion. The sequence is that of Glucosamine-6-phosphate deaminase from Clostridium perfringens (strain ATCC 13124 / DSM 756 / JCM 1290 / NCIMB 6125 / NCTC 8237 / Type A).